The chain runs to 501 residues: Trans-cinnamate 4-monooxygenase (501 aa).

Residues 3–23 (LVLLEKALLGLFAAAVLAVAV) form a helical membrane-spanning segment. (E)-cinnamate-binding positions include 213-218 (RSRLSQ) and Ala302. Cys443 lines the heme pocket.

This sequence belongs to the cytochrome P450 family. It depends on heme as a cofactor.

It localises to the membrane. The enzyme catalyses (E)-cinnamate + reduced [NADPH--hemoprotein reductase] + O2 = (E)-4-coumarate + oxidized [NADPH--hemoprotein reductase] + H2O + H(+). It functions in the pathway phenylpropanoid metabolism; trans-4-coumarate biosynthesis; trans-4-coumarate from trans-cinnamate: step 1/1. Catalyzes the first oxidative step of the phenylpropanoid pathway in higher plants by transforming trans-cinnamate into p-coumarate. The compounds formed by this pathway are essential components for lignification, pollination, and defense against ultraviolet light, predators and pathogens. Can also use 2-naphthoic acid as substrate. In Sorghum bicolor (Sorghum), this protein is Trans-cinnamate 4-monooxygenase.